We begin with the raw amino-acid sequence, 506 residues long: Dipeptide and tripeptide permease A (506 aa).

Over 1–36 the chain is Cytoplasmic; it reads MSTANNNSESTESVSMNAFKQPKAFYLIFSIELWER. A helical membrane pass occupies residues 37 to 57; sequence FGYYGLQGIMAVYLVKMLGMS. Residues 58–61 lie on the Periplasmic side of the membrane; sequence ETDS. Residues 62–82 form a helical membrane-spanning segment; sequence ITLFSSFSALVYGFVAIGGWL. The Cytoplasmic portion of the chain corresponds to 83–91; the sequence is GDKVLGTKR. The next 2 helical transmembrane spans lie at 92 to 112 and 113 to 133; these read VIVL…YSGH and SVAW…LFKA. Topologically, residues 134-155 are cytoplasmic; it reads NPSALLSTCYAKDDPRLDGAFT. A helical membrane pass occupies residues 156-176; that stretch reads MYYMAVNIGSFFSMLATPVLA. Residues 177–180 are Periplasmic-facing; that stretch reads ANYG. Residues 181–201 form a helical membrane-spanning segment; the sequence is WSVAFSLSVVGMILTLVNFMF. Residues 202-222 are Cytoplasmic-facing; sequence CRKWVSTQGSQPDFQPINLKK. A helical transmembrane segment spans residues 223–243; the sequence is LVITLAGIVVLVALSTWLLHN. Over 244-248 the chain is Periplasmic; sequence QGVAR. The helical transmembrane segment at 249–269 threads the bilayer; that stretch reads WILTIISLAVVAIFIKEMLAV. The Cytoplasmic portion of the chain corresponds to 270–276; that stretch reads SGAERRK. Residues 277–297 traverse the membrane as a helical segment; the sequence is MIVALLLMLEAVVFFVLYNQM. At 298 to 322 the chain is on the periplasmic side; it reads PTSLNFFAIRNVEHSILGFAFEPEQ. The helical transmembrane segment at 323–343 threads the bilayer; that stretch reads YQALNPFWIMVASPLLAAVYN. Topologically, residues 344–354 are cytoplasmic; the sequence is KMGDQLPMAHK. A helical membrane pass occupies residues 355 to 375; it reads FAIGMVLCSGAFLVLPWGASM. Residues 376–385 lie on the Periplasmic side of the membrane; that stretch reads ANEQGIVSVN. Residues 386–406 form a helical membrane-spanning segment; that stretch reads WLILCYGLQSIGELMISGLGL. Over 407-416 the chain is Cytoplasmic; it reads AMVAQLVPQR. The chain crosses the membrane as a helical span at residues 417 to 437; the sequence is LMGFIMGAWFLTSAGAAIIAG. Residues 438–461 are Periplasmic-facing; that stretch reads YVANMMAVPENVVDPHVSLEVYSN. Residues 462–482 form a helical membrane-spanning segment; the sequence is VFMQIGIVTGIIAVLMMLTAP. Over 483–506 the chain is Cytoplasmic; it reads KLTRMTQDVATDVPADAATTTASA.

This sequence belongs to the major facilitator superfamily. Proton-dependent oligopeptide transporter (POT/PTR) (TC 2.A.17) family. DtpA subfamily.

It localises to the cell inner membrane. In terms of biological role, proton-dependent permease that transports di- and tripeptides. The sequence is that of Dipeptide and tripeptide permease A from Pectobacterium carotovorum subsp. carotovorum (strain PC1).